The following is a 197-amino-acid chain: Probable S-adenosylmethionine-dependent methyltransferase MJ0882 (197 aa).

Residues Gly63–Gly67, Asp84, and Asn129 each bind S-adenosyl-L-methionine. Asn129 to Ile132 contacts substrate.

This sequence belongs to the methyltransferase superfamily.

Functionally, probable methyltransferase that uses S-adenosylmethionine as the methyl donor. Binds neither NAD nor NADP in vitro. This chain is Probable S-adenosylmethionine-dependent methyltransferase MJ0882, found in Methanocaldococcus jannaschii (strain ATCC 43067 / DSM 2661 / JAL-1 / JCM 10045 / NBRC 100440) (Methanococcus jannaschii).